A 106-amino-acid polypeptide reads, in one-letter code: Ribosomal protein eL42-like (106 aa).

The tract at residues 26 to 53 is disordered; sequence YKKGKDSLYAQGRRRYDRKQSGYGGQTK. K53 is modified (N6-methyllysine).

The protein belongs to the eukaryotic ribosomal protein eL42 family. Ubiquitously expressed.

The protein resides in the cytoplasm. The polypeptide is Ribosomal protein eL42-like (RPL36AL) (Homo sapiens (Human)).